The following is a 181-amino-acid chain: Transcriptional repressor NrdR (181 aa).

A zinc finger lies at Cys3–Cys34. The 91-residue stretch at Ile49–Asp139 folds into the ATP-cone domain.

Belongs to the NrdR family. It depends on Zn(2+) as a cofactor.

Functionally, negatively regulates transcription of bacterial ribonucleotide reductase nrd genes and operons by binding to NrdR-boxes. The polypeptide is Transcriptional repressor NrdR (Picosynechococcus sp. (strain ATCC 27264 / PCC 7002 / PR-6) (Agmenellum quadruplicatum)).